Consider the following 228-residue polypeptide: Ribose-5-phosphate isomerase A (228 aa).

Substrate is bound by residues 29–32, 84–87, and 97–100; these read TGST, DGAD, and KGGG. Catalysis depends on E106, which acts as the Proton acceptor. Residue K124 participates in substrate binding.

This sequence belongs to the ribose 5-phosphate isomerase family. As to quaternary structure, homodimer.

It catalyses the reaction aldehydo-D-ribose 5-phosphate = D-ribulose 5-phosphate. It functions in the pathway carbohydrate degradation; pentose phosphate pathway; D-ribose 5-phosphate from D-ribulose 5-phosphate (non-oxidative stage): step 1/1. In terms of biological role, catalyzes the reversible conversion of ribose-5-phosphate to ribulose 5-phosphate. The sequence is that of Ribose-5-phosphate isomerase A from Sphingopyxis alaskensis (strain DSM 13593 / LMG 18877 / RB2256) (Sphingomonas alaskensis).